Consider the following 377-residue polypeptide: tRNA-specific 2-thiouridylase MnmA (377 aa).

Residues 8–15 (GMSGGVDS) and Met-34 contribute to the ATP site. The segment at 94–96 (NPD) is interaction with target base in tRNA. The Nucleophile role is filled by Cys-99. Cys-99 and Cys-201 are joined by a disulfide. Gly-123 is a binding site for ATP. The tract at residues 151 to 153 (KDQ) is interaction with tRNA. Cys-201 serves as the catalytic Cysteine persulfide intermediate. The interaction with tRNA stretch occupies residues 315 to 316 (RY).

This sequence belongs to the MnmA/TRMU family.

It is found in the cytoplasm. It carries out the reaction S-sulfanyl-L-cysteinyl-[protein] + uridine(34) in tRNA + AH2 + ATP = 2-thiouridine(34) in tRNA + L-cysteinyl-[protein] + A + AMP + diphosphate + H(+). Functionally, catalyzes the 2-thiolation of uridine at the wobble position (U34) of tRNA, leading to the formation of s(2)U34. This is tRNA-specific 2-thiouridylase MnmA from Acinetobacter baylyi (strain ATCC 33305 / BD413 / ADP1).